The sequence spans 202 residues: Nascent polypeptide-associated complex subunit alpha (202 aa).

Positions 1 to 19 are enriched in basic and acidic residues; the sequence is MADPRVEEIVEEETPKQTV. Positions 1–41 are disordered; the sequence is MADPRVEEIVEEETPKQTVEDAGSDSESEAGEANIPAGAAV. In terms of domain architecture, NAC-A/B spans 45–110; it reads SRNEKKARKA…AKIEDLNSQA (66 aa). The segment covering 117 to 127 has biased composition (low complexity); it reads QLAAAEAAAGE. The disordered stretch occupies residues 117–165; sequence QLAAAEAAAGEHAGHDHEHDLGTKVPEAETKKEEEEDDGEPVDESGLEA. Basic and acidic residues predominate over residues 128 to 149; the sequence is HAGHDHEHDLGTKVPEAETKKE. Over residues 150–162 the composition is skewed to acidic residues; sequence EEEDDGEPVDESG. The UBA domain maps to 163–202; the sequence is LEAKDIELVMAQANVSRKKAVKALRENDNDIVNSIMALSI.

The protein belongs to the NAC-alpha family. Part of the nascent polypeptide-associated complex (NAC), consisting of egd2 and egd1. NAC associates with ribosomes via egd1.

The protein resides in the cytoplasm. Its subcellular location is the nucleus. Functionally, component of the nascent polypeptide-associated complex (NAC), a dynamic component of the ribosomal exit tunnel, protecting the emerging polypeptides from interaction with other cytoplasmic proteins to ensure appropriate nascent protein targeting. The NAC complex also promotes mitochondrial protein import by enhancing productive ribosome interactions with the outer mitochondrial membrane and blocks the inappropriate interaction of ribosomes translating non-secretory nascent polypeptides with translocation sites in the membrane of the endoplasmic reticulum. Egd2 may also be involved in transcription regulation. In Aspergillus oryzae (strain ATCC 42149 / RIB 40) (Yellow koji mold), this protein is Nascent polypeptide-associated complex subunit alpha (egd2).